The primary structure comprises 631 residues: Transmembrane and coiled-coil domain-containing protein 4 (631 aa).

The interval 1–26 (MATWNRPHPRLPVAPEPVAEGESQQP) is disordered. Residues 153–183 (EEVFLESLKDAKEEESETAEESRKRKEKRRK) are a coiled coil. 4 consecutive transmembrane segments (helical) span residues 187-203 (YLLIGLATVGGGTVIGV), 204-220 (TGGLAAPLVAAGAATII), 228-248 (LGSVAGIAVMTSLFGAAGAGL), and 343-363 (LSGIVAALTLPASLLSVANVI). Residues 523–631 (WSEKGLPLAP…ETQESCAELD (109 aa)) are disordered. Over residues 571-590 (IPSSASQAQVPAGLDQSTED) the composition is skewed to polar residues.

It belongs to the TMCO4 family.

It localises to the membrane. The sequence is that of Transmembrane and coiled-coil domain-containing protein 4 (Tmco4) from Rattus norvegicus (Rat).